The following is a 155-amino-acid chain: 3-hydroxyacyl-[acyl-carrier-protein] dehydratase FabZ (155 aa).

Histidine 57 is an active-site residue.

The protein belongs to the thioester dehydratase family. FabZ subfamily.

The protein localises to the cytoplasm. It catalyses the reaction a (3R)-hydroxyacyl-[ACP] = a (2E)-enoyl-[ACP] + H2O. Its function is as follows. Involved in unsaturated fatty acids biosynthesis. Catalyzes the dehydration of short chain beta-hydroxyacyl-ACPs and long chain saturated and unsaturated beta-hydroxyacyl-ACPs. This chain is 3-hydroxyacyl-[acyl-carrier-protein] dehydratase FabZ, found in Sorangium cellulosum (strain So ce56) (Polyangium cellulosum (strain So ce56)).